Consider the following 308-residue polypeptide: Ribosomal protein L11 methyltransferase (308 aa).

The S-adenosyl-L-methionine site is built by threonine 160, glycine 181, aspartate 203, and asparagine 245.

The protein belongs to the methyltransferase superfamily. PrmA family.

The protein localises to the cytoplasm. It catalyses the reaction L-lysyl-[protein] + 3 S-adenosyl-L-methionine = N(6),N(6),N(6)-trimethyl-L-lysyl-[protein] + 3 S-adenosyl-L-homocysteine + 3 H(+). Its function is as follows. Methylates ribosomal protein L11. This is Ribosomal protein L11 methyltransferase from Thermoanaerobacter sp. (strain X514).